Reading from the N-terminus, the 495-residue chain is Probable aminotransferase ACS12 (495 aa).

Lys-334 is modified (N6-(pyridoxal phosphate)lysine).

Belongs to the class-I pyridoxal-phosphate-dependent aminotransferase family. Homodimer. Pyridoxal 5'-phosphate serves as cofactor. As to expression, expressed in roots. Expressed at low level in leaves, stems, flowers and siliques.

Functionally, probable aminotransferase. Does not have 1-aminocyclopropane-1-carboxylate synthase (ACS) activity, suggesting that it is not involved in ethylene biosynthesis. This is Probable aminotransferase ACS12 (ACS12) from Arabidopsis thaliana (Mouse-ear cress).